A 158-amino-acid polypeptide reads, in one-letter code: UPF0178 protein Rpal_2485 (158 aa).

The protein belongs to the UPF0178 family.

This is UPF0178 protein Rpal_2485 from Rhodopseudomonas palustris (strain TIE-1).